The sequence spans 244 residues: Probable transcriptional regulatory protein Aasi_0624 (244 aa).

Belongs to the TACO1 family.

Its subcellular location is the cytoplasm. This Amoebophilus asiaticus (strain 5a2) protein is Probable transcriptional regulatory protein Aasi_0624.